A 618-amino-acid chain; its full sequence is Carotenoid cleavage dioxygenase 7, chloroplastic (618 aa).

A chloroplast-targeting transit peptide spans 1-31; it reads MSLPIPPKFLPPLKSPPIHHHQTPPPLAPPR. The tract at residues 11–34 is disordered; sequence PPLKSPPIHHHQTPPPLAPPRAAI. Fe cation contacts are provided by His-266, His-319, His-398, and His-612.

The protein belongs to the carotenoid oxygenase family. The cofactor is Fe(2+). As to expression, expressed in flowers, siliques, inflorescence stems, petiole, leaves and roots.

The protein localises to the plastid. Its subcellular location is the chloroplast. The catalysed reaction is 9-cis-beta-carotene + O2 = 9-cis-10'-apo-beta-carotenal + beta-ionone. In terms of biological role, involved in strigolactones biosynthesis by cleaving asymmetrically a variety of linear and cyclic carotenoids at the 9-10 double bond. Produces one C(13) beta-ionone and the C(27) 10'-apo-beta-carotenal. Strigolactones are hormones that inhibit tillering and shoot branching through the MAX-dependent pathway, contribute to the regulation of shoot architectural response to phosphate-limiting conditions and function as rhizosphere signal that stimulates hyphal branching of arbuscular mycorrhizal fungi and trigger seed germination of root parasitic weeds. No activity on lycopene, lutein, zeaxanthin, violaxanthin or neoxanthin. Probably not involved in abscisic acid biosynthesis. This is Carotenoid cleavage dioxygenase 7, chloroplastic (CCD7) from Arabidopsis thaliana (Mouse-ear cress).